Reading from the N-terminus, the 109-residue chain is MSITDVLSADDIAAALQECQDPDTFEPQKFFQTSGLSKMSASQVKDVFRFIDNDQSGYLDEEELKFFLQKFESGARELTESETKSLMAAADNDGDGKIGAEEFQEMVHS.

EF-hand domains follow at residues 39 to 74 and 78 to 109; these read MSAS…FESG and LTES…MVHS. 10 residues coordinate Ca(2+): Asp52, Asp54, Ser56, Tyr58, Glu63, Asp91, Asp93, Asp95, Lys97, and Glu102.

Belongs to the parvalbumin family.

The protein is Oncomodulin-2 (OCM2) of Homo sapiens (Human).